Here is a 172-residue protein sequence, read N- to C-terminus: Small ribosomal subunit protein uS5 (172 aa).

In terms of domain architecture, S5 DRBM spans 11 to 74 (LFESVVDIAR…RKAKGAMIRF (64 aa)).

The protein belongs to the universal ribosomal protein uS5 family. Part of the 30S ribosomal subunit. Contacts proteins S4 and S8.

In terms of biological role, with S4 and S12 plays an important role in translational accuracy. Its function is as follows. Located at the back of the 30S subunit body where it stabilizes the conformation of the head with respect to the body. This chain is Small ribosomal subunit protein uS5, found in Neorickettsia sennetsu (strain ATCC VR-367 / Miyayama) (Ehrlichia sennetsu).